We begin with the raw amino-acid sequence, 487 residues long: Serine/threonine-protein kinase BSK7 (487 aa).

Glycine 2 carries N-myristoyl glycine lipidation. Residues 59 to 325 (ENIVSEHGEK…DLETPSHQLM (267 aa)) enclose the Protein kinase domain. ATP-binding positions include 65 to 73 (HGEKAPNVV) and lysine 87. Catalysis depends on aspartate 181, which acts as the Proton acceptor.

The protein belongs to the protein kinase superfamily. Ser/Thr protein kinase family.

Its subcellular location is the cell membrane. The enzyme catalyses L-seryl-[protein] + ATP = O-phospho-L-seryl-[protein] + ADP + H(+). The catalysed reaction is L-threonyl-[protein] + ATP = O-phospho-L-threonyl-[protein] + ADP + H(+). In terms of biological role, probable serine/threonine kinase that acts as a positive regulator of brassinosteroid (BR) signaling downstream of the receptor kinase BRI1. Functions redundantly with BSK3, BSK5, BSK6 and BSK8. This Arabidopsis thaliana (Mouse-ear cress) protein is Serine/threonine-protein kinase BSK7.